We begin with the raw amino-acid sequence, 337 residues long: Cytoskeleton protein RodZ (337 aa).

The Cytoplasmic portion of the chain corresponds to 1-111; it reads MNTEATHDQN…LGKRRKKRDG (111 aa). Residues 19-71 form the HTH cro/C1-type domain; that stretch reads LRNAREQLGLSQQAVAERLCLKVSTVRDIEEDKAPADLASTFLRGYIRSYARL. Positions 30-49 form a DNA-binding region, H-T-H motif; that stretch reads QQAVAERLCLKVSTVRDIEE. A helical; Signal-anchor for type II membrane protein membrane pass occupies residues 112-132; it reads WLMTFTWLVLFVVIGLSGAWW. Residues 133 to 337 are Periplasmic-facing; the sequence is WQDHKAQQEE…TLNAEQSPAQ (205 aa). Residues 145–167 show a composition bias toward polar residues; sequence TMADQSSAELSSNSEQGQSVPLN. The tract at residues 145–236 is disordered; sequence TMADQSSAEL…TAATTPDGAA (92 aa). Low complexity predominate over residues 168–207; sequence TSTTTDPATTSTPPASVDTTATNTQTPAVTAPAPAVDPQQ. Polar residues predominate over residues 208–218; sequence NAVVSPSQANV. The segment covering 219–236 has biased composition (low complexity); it reads DTAATPAPTAATTPDGAA.

This sequence belongs to the RodZ family.

The protein resides in the cell inner membrane. Functionally, cytoskeletal protein that is involved in cell-shape control through regulation of the length of the long axis. The sequence is that of Cytoskeleton protein RodZ from Escherichia coli O9:H4 (strain HS).